The following is a 520-amino-acid chain: 2-isopropylmalate synthase (520 aa).

Positions 5-267 (VIIFDTTLRD…YTNINHQEIY (263 aa)) constitute a Pyruvate carboxyltransferase domain. Residues Asp14, His202, His204, and Asn238 each coordinate Mn(2+). Residues 392-520 (HLDNFNIQSG…RIQQNTKEMV (129 aa)) form a regulatory domain region.

The protein belongs to the alpha-IPM synthase/homocitrate synthase family. LeuA type 1 subfamily. Homodimer. The cofactor is Mn(2+).

Its subcellular location is the cytoplasm. The catalysed reaction is 3-methyl-2-oxobutanoate + acetyl-CoA + H2O = (2S)-2-isopropylmalate + CoA + H(+). Its pathway is amino-acid biosynthesis; L-leucine biosynthesis; L-leucine from 3-methyl-2-oxobutanoate: step 1/4. In terms of biological role, catalyzes the condensation of the acetyl group of acetyl-CoA with 3-methyl-2-oxobutanoate (2-ketoisovalerate) to form 3-carboxy-3-hydroxy-4-methylpentanoate (2-isopropylmalate). This chain is 2-isopropylmalate synthase, found in Photorhabdus laumondii subsp. laumondii (strain DSM 15139 / CIP 105565 / TT01) (Photorhabdus luminescens subsp. laumondii).